The primary structure comprises 100 residues: ATP synthase subunit g 2, mitochondrial (100 aa).

Belongs to the ATPase g subunit family. F-type ATPases have 2 components, CF(1) - the catalytic core - and CF(0) - the membrane proton channel. CF(0) seems to have nine subunits: a, b, c, d, e, f, g, F6 and 8 (or A6L).

It is found in the mitochondrion membrane. Functionally, mitochondrial membrane ATP synthase (F(1)F(0) ATP synthase or Complex V) produces ATP from ADP in the presence of a proton gradient across the membrane which is generated by electron transport complexes of the respiratory chain. F-type ATPases consist of two structural domains, F(1) - containing the extramembraneous catalytic core, and F(0) - containing the membrane proton channel, linked together by a central stalk and a peripheral stalk. During catalysis, ATP synthesis in the catalytic domain of F(1) is coupled via a rotary mechanism of the central stalk subunits to proton translocation. Part of the complex F(0) domain. Minor subunit located with subunit a in the membrane. This is ATP synthase subunit g 2, mitochondrial from Homo sapiens (Human).